Here is a 317-residue protein sequence, read N- to C-terminus: L-lactate dehydrogenase (317 aa).

Residues valine 17, aspartate 38, lysine 43, tyrosine 69, and 83–84 each bind NAD(+); that span reads GA. Substrate contacts are provided by glutamine 86 and arginine 92. NAD(+)-binding positions include serine 105, 122–124, and serine 147; that span reads ATN. 124 to 127 is a substrate binding site; the sequence is NPVD. Substrate is bound at residue 152 to 155; the sequence is DTAR. Residues arginine 157 and histidine 172 each coordinate beta-D-fructose 1,6-bisphosphate. Catalysis depends on histidine 179, which acts as the Proton acceptor. At tyrosine 224 the chain carries Phosphotyrosine. Position 233 (threonine 233) interacts with substrate.

The protein belongs to the LDH/MDH superfamily. LDH family. Homotetramer.

It is found in the cytoplasm. It catalyses the reaction (S)-lactate + NAD(+) = pyruvate + NADH + H(+). It functions in the pathway fermentation; pyruvate fermentation to lactate; (S)-lactate from pyruvate: step 1/1. Allosterically activated by fructose 1,6-bisphosphate (FBP). Catalyzes the conversion of lactate to pyruvate. The sequence is that of L-lactate dehydrogenase from Bacillus caldolyticus.